Reading from the N-terminus, the 535-residue chain is Secreted lipase 5 (535 aa).

An N-terminal signal peptide occupies residues Met-1–Ala-17. 2 N-linked (GlcNAc...) asparagine glycosylation sites follow: Asn-32 and Asn-119. Ser-241 functions as the Acyl-ester intermediate in the catalytic mechanism. Residues Asn-282, Asn-341, Asn-347, and Asn-432 are each glycosylated (N-linked (GlcNAc...) asparagine).

Belongs to the type-B carboxylesterase/lipase family.

The protein resides in the secreted. The catalysed reaction is a carboxylic ester + H2O = an alcohol + a carboxylate + H(+). In terms of biological role, secreted lipase involved in plant virulence. Has a substrate preference for p-nitrophenyl esters with a carbon chain length of C8 (p-nitrophenyl caprylate). This Gibberella zeae (strain ATCC MYA-4620 / CBS 123657 / FGSC 9075 / NRRL 31084 / PH-1) (Wheat head blight fungus) protein is Secreted lipase 5.